Here is a 271-residue protein sequence, read N- to C-terminus: MATYFVGDIQGCLDELLLLLERVEFNREKDQLWLTGDLVARGPKSLETLRFVKSLGNAAVTILGNHDLHLLAVSQGISRVKEKDKTAPIFTAPDSEELLTWLRHQPLLAVHSEYDIVMTHAGISPQWNMATAIDCAREVESVLLSDKWVLLLENMYENYPDTWDVTLSGIDRYRYIINAFTRMRFCHLDGRLDMECKLPPQDINSDELVPWFELENRLPLSHKVIFGHWAALMGHDGNNVIALDTGCVWGEYMTMYRVDDGKYFTQKAIEQ.

Belongs to the Ap4A hydrolase family.

It carries out the reaction P(1),P(4)-bis(5'-adenosyl) tetraphosphate + H2O = 2 ADP + 2 H(+). Its function is as follows. Hydrolyzes diadenosine 5',5'''-P1,P4-tetraphosphate to yield ADP. This Aliivibrio fischeri (strain ATCC 700601 / ES114) (Vibrio fischeri) protein is Bis(5'-nucleosyl)-tetraphosphatase, symmetrical.